Here is a 103-residue protein sequence, read N- to C-terminus: Sperm-associated antigen 11B (103 aa).

An N-terminal signal peptide occupies residues 1–25 (MRQRLLPSVTSLLLVALLFPGSSQA). An N-linked (GlcNAc...) asparagine glycan is attached at Asn29.

Belongs to the SPAG11 family. Specifically expressed in caput and proximal corpus of epididymis (at protein level). Present in the epididymal epithelium and on the sperm surface, with a subacrosomal equatorial distribution on the sperm head (at protein level).

It localises to the secreted. Its function is as follows. Has antimicrobial activity against E.coli. Plays a role in the defense response in the male reproductive tract, contributing to sperm maturation, storage and protection. This Homo sapiens (Human) protein is Sperm-associated antigen 11B.